A 207-amino-acid chain; its full sequence is Negative modulator of initiation of replication (207 aa).

The span at 43 to 54 (ATPITSSVTPSA) shows a compositional bias: polar residues. A disordered region spans residues 43-63 (ATPITSSVTPSAPRQEAVNDE).

The protein belongs to the SeqA family. Homodimer. Polymerizes to form helical filaments.

Its subcellular location is the cytoplasm. Functionally, negative regulator of replication initiation, which contributes to regulation of DNA replication and ensures that replication initiation occurs exactly once per chromosome per cell cycle. Binds to pairs of hemimethylated GATC sequences in the oriC region, thus preventing assembly of replication proteins and re-initiation at newly replicated origins. Repression is relieved when the region becomes fully methylated. The polypeptide is Negative modulator of initiation of replication (Psychromonas ingrahamii (strain DSM 17664 / CCUG 51855 / 37)).